Consider the following 267-residue polypeptide: Phosphatidylglycerol--prolipoprotein diacylglyceryl transferase (267 aa).

7 consecutive transmembrane segments (helical) span residues 17–37, 56–76, 91–111, 120–140, 173–193, 199–219, and 236–256; these read LNIR…WLLA, LVTY…TLFY, IWNG…AIWL, LFEV…AGRL, QLYE…LFSA, MAVS…VEFF, and MGQI…GFAM. Residue arginine 139 participates in a 1,2-diacyl-sn-glycero-3-phospho-(1'-sn-glycerol) binding.

It belongs to the Lgt family.

It localises to the cell inner membrane. It catalyses the reaction L-cysteinyl-[prolipoprotein] + a 1,2-diacyl-sn-glycero-3-phospho-(1'-sn-glycerol) = an S-1,2-diacyl-sn-glyceryl-L-cysteinyl-[prolipoprotein] + sn-glycerol 1-phosphate + H(+). It functions in the pathway protein modification; lipoprotein biosynthesis (diacylglyceryl transfer). Its function is as follows. Catalyzes the transfer of the diacylglyceryl group from phosphatidylglycerol to the sulfhydryl group of the N-terminal cysteine of a prolipoprotein, the first step in the formation of mature lipoproteins. The sequence is that of Phosphatidylglycerol--prolipoprotein diacylglyceryl transferase from Oleidesulfovibrio alaskensis (strain ATCC BAA-1058 / DSM 17464 / G20) (Desulfovibrio alaskensis).